The chain runs to 324 residues: Carbamate kinase (324 aa).

This sequence belongs to the carbamate kinase family.

Its subcellular location is the cytoplasm. It carries out the reaction hydrogencarbonate + NH4(+) + ATP = carbamoyl phosphate + ADP + H2O + H(+). It functions in the pathway amino-acid degradation; L-arginine degradation via ADI pathway. In Rhizobium meliloti (strain 1021) (Ensifer meliloti), this protein is Carbamate kinase.